A 260-amino-acid chain; its full sequence is uncharacterized protein (260 aa).

Residues 214-252 (IHQFIETEIERIMEAAKELKAEKKDMTSELNRLLLNTVE) are a coiled coil.

This is an uncharacterized protein from Bacillus subtilis (strain 168).